Here is a 102-residue protein sequence, read N- to C-terminus: Large ribosomal subunit protein bL21 (102 aa).

This sequence belongs to the bacterial ribosomal protein bL21 family. In terms of assembly, part of the 50S ribosomal subunit. Contacts protein L20.

In terms of biological role, this protein binds to 23S rRNA in the presence of protein L20. The protein is Large ribosomal subunit protein bL21 of Pelobacter propionicus (strain DSM 2379 / NBRC 103807 / OttBd1).